Consider the following 283-residue polypeptide: DegV domain-containing protein lmo2514 (283 aa).

In terms of domain architecture, DegV spans 5 to 282; that stretch reads IAVVTDSTTY…EGALGLTWSI (278 aa). Residues Ser63 and Ser96 each contribute to the hexadecanoate site.

Functionally, may bind long-chain fatty acids, such as palmitate, and may play a role in lipid transport or fatty acid metabolism. This is DegV domain-containing protein lmo2514 from Listeria monocytogenes serovar 1/2a (strain ATCC BAA-679 / EGD-e).